Here is a 793-residue protein sequence, read N- to C-terminus: Kinesin-like protein KIF3C (793 aa).

The Kinesin motor domain occupies 10–365; the sequence is ALKVVARCRP…LRFANRAKNI (356 aa). ATP is bound at residue 97 to 104; it reads GQTGTGKT. 3 disordered regions span residues 251 to 288, 395 to 423, and 756 to 793; these read ERQN…ERPK, EKRG…GYPE, and KVRK…ADHE. Gly residues predominate over residues 270-284; it reads GGSGGGGGSGGGAGG. Residues 376–630 adopt a coiled-coil conformation; the sequence is KDTLLREFQE…QNEQTRELKL (255 aa). The segment covering 399-413 has biased composition (basic residues); the sequence is MLGKRPRRKSSRGKK. The tract at residues 631–793 is globular; the sequence is KYLIIENFIP…LRPATVADHE (163 aa).

This sequence belongs to the TRAFAC class myosin-kinesin ATPase superfamily. Kinesin family. Kinesin II subfamily. As to quaternary structure, heterodimer of KIF3A and KIF3C.

It localises to the cytoplasm. Its subcellular location is the cytoskeleton. In terms of biological role, microtubule-based anterograde translocator for membranous organelles. The chain is Kinesin-like protein KIF3C (KIF3C) from Pongo abelii (Sumatran orangutan).